We begin with the raw amino-acid sequence, 552 residues long: Cholesterol oxidase (552 aa).

Residues 1–45 (MTDSRANRADATRGVASVSRRRFLAGAGLTAGAIALSSMSTSASA) constitute a signal peptide (tat-type signal). Tyr-66, Gly-67, Glu-86, Gly-160, Asn-164, Gly-165, Met-167, and Val-295 together coordinate FAD. Active-site proton acceptor residues include Glu-406 and His-492. Residues Gly-520 and Phe-532 each coordinate FAD.

This sequence belongs to the GMC oxidoreductase family. It depends on FAD as a cofactor. Predicted to be exported by the Tat system. The position of the signal peptide cleavage has been experimentally proven.

It is found in the secreted. The catalysed reaction is cholesterol + O2 = cholest-5-en-3-one + H2O2. It catalyses the reaction cholest-5-en-3-one = cholest-4-en-3-one. The protein operates within steroid metabolism; cholesterol degradation. Functionally, bifunctional enzyme that catalyzes the oxidation and isomerization of cholesterol to cholestenone (cholest-4-en-3-one), an initial step in the cholesterol degradation process. The polypeptide is Cholesterol oxidase (Brevibacterium sterolicum).